The chain runs to 553 residues: Putative transport protein Ent638_0015 (553 aa).

5 helical membrane passes run 4–24, 28–48, 65–85, 95–115, and 158–178; these read IALT…IGNI, GVGL…HFAE, FGLI…FFAS, LFAL…HKLF, and MSYA…MWLV. 2 RCK C-terminal domains span residues 191–276 and 279–361; these read KKHE…VIGQ and ETSL…MVGN. The next 6 helical transmembrane spans lie at 371–391, 403–425, 439–459, 464–484, 493–513, and 533–553; these read MLPV…PLYV, AGGP…LYWF, IVLF…DTLA, ISWI…IGIL, YLTL…LAFA, and LVMF…WGMG.

It belongs to the AAE transporter (TC 2.A.81) family. YidE subfamily.

The protein resides in the cell membrane. The protein is Putative transport protein Ent638_0015 of Enterobacter sp. (strain 638).